Reading from the N-terminus, the 170-residue chain is Shikimate kinase (170 aa).

15-20 (GAGKTT) contributes to the ATP binding site. T19 provides a ligand contact to Mg(2+). Substrate is bound by residues D37, R61, and G83. An ATP-binding site is contributed by R121. Position 140 (R140) interacts with substrate.

This sequence belongs to the shikimate kinase family. As to quaternary structure, monomer. It depends on Mg(2+) as a cofactor.

It localises to the cytoplasm. It carries out the reaction shikimate + ATP = 3-phosphoshikimate + ADP + H(+). Its pathway is metabolic intermediate biosynthesis; chorismate biosynthesis; chorismate from D-erythrose 4-phosphate and phosphoenolpyruvate: step 5/7. Catalyzes the specific phosphorylation of the 3-hydroxyl group of shikimic acid using ATP as a cosubstrate. This Neisseria meningitidis serogroup C (strain 053442) protein is Shikimate kinase.